Reading from the N-terminus, the 625-residue chain is tRNA uridine 5-carboxymethylaminomethyl modification enzyme MnmG (625 aa).

Residues 9 to 14 (GGGHAG), Val-121, and Ser-177 contribute to the FAD site. 271–285 (GPRYCPSIEDKVNRF) serves as a coordination point for NAD(+). Gln-368 is an FAD binding site.

This sequence belongs to the MnmG family. In terms of assembly, homodimer. Heterotetramer of two MnmE and two MnmG subunits. FAD serves as cofactor.

It is found in the cytoplasm. In terms of biological role, NAD-binding protein involved in the addition of a carboxymethylaminomethyl (cmnm) group at the wobble position (U34) of certain tRNAs, forming tRNA-cmnm(5)s(2)U34. This is tRNA uridine 5-carboxymethylaminomethyl modification enzyme MnmG from Aliarcobacter butzleri (strain RM4018) (Arcobacter butzleri).